Consider the following 176-residue polypeptide: Large ribosomal subunit protein uL10 (176 aa).

Belongs to the universal ribosomal protein uL10 family. As to quaternary structure, part of the ribosomal stalk of the 50S ribosomal subunit. The N-terminus interacts with L11 and the large rRNA to form the base of the stalk. The C-terminus forms an elongated spine to which L12 dimers bind in a sequential fashion forming a multimeric L10(L12)X complex.

Functionally, forms part of the ribosomal stalk, playing a central role in the interaction of the ribosome with GTP-bound translation factors. This Streptomyces avermitilis (strain ATCC 31267 / DSM 46492 / JCM 5070 / NBRC 14893 / NCIMB 12804 / NRRL 8165 / MA-4680) protein is Large ribosomal subunit protein uL10.